The sequence spans 270 residues: Release factor glutamine methyltransferase (270 aa).

Residues 113-117, Asp-136, and Asn-177 each bind S-adenosyl-L-methionine; that span reads GTGSG. 177–180 contacts substrate; it reads NPPY.

The protein belongs to the protein N5-glutamine methyltransferase family. PrmC subfamily.

The enzyme catalyses L-glutaminyl-[peptide chain release factor] + S-adenosyl-L-methionine = N(5)-methyl-L-glutaminyl-[peptide chain release factor] + S-adenosyl-L-homocysteine + H(+). Methylates the class 1 translation termination release factors RF1/PrfA and RF2/PrfB on the glutamine residue of the universally conserved GGQ motif. The polypeptide is Release factor glutamine methyltransferase (Lactococcus lactis subsp. lactis (strain IL1403) (Streptococcus lactis)).